We begin with the raw amino-acid sequence, 342 residues long: N-acetyl-gamma-glutamyl-phosphate reductase (342 aa).

Cysteine 147 is an active-site residue.

The protein belongs to the NAGSA dehydrogenase family. Type 1 subfamily.

The protein localises to the cytoplasm. It catalyses the reaction N-acetyl-L-glutamate 5-semialdehyde + phosphate + NADP(+) = N-acetyl-L-glutamyl 5-phosphate + NADPH + H(+). The protein operates within amino-acid biosynthesis; L-arginine biosynthesis; N(2)-acetyl-L-ornithine from L-glutamate: step 3/4. In terms of biological role, catalyzes the NADPH-dependent reduction of N-acetyl-5-glutamyl phosphate to yield N-acetyl-L-glutamate 5-semialdehyde. The protein is N-acetyl-gamma-glutamyl-phosphate reductase of Campylobacter jejuni subsp. doylei (strain ATCC BAA-1458 / RM4099 / 269.97).